We begin with the raw amino-acid sequence, 248 residues long: Aspartate/glutamate leucyltransferase (248 aa).

The protein belongs to the R-transferase family. Bpt subfamily.

Its subcellular location is the cytoplasm. It catalyses the reaction N-terminal L-glutamyl-[protein] + L-leucyl-tRNA(Leu) = N-terminal L-leucyl-L-glutamyl-[protein] + tRNA(Leu) + H(+). It carries out the reaction N-terminal L-aspartyl-[protein] + L-leucyl-tRNA(Leu) = N-terminal L-leucyl-L-aspartyl-[protein] + tRNA(Leu) + H(+). In terms of biological role, functions in the N-end rule pathway of protein degradation where it conjugates Leu from its aminoacyl-tRNA to the N-termini of proteins containing an N-terminal aspartate or glutamate. The chain is Aspartate/glutamate leucyltransferase from Methylobacterium nodulans (strain LMG 21967 / CNCM I-2342 / ORS 2060).